Consider the following 485-residue polypeptide: Cysteine--tRNA ligase (485 aa).

Position 27 (cysteine 27) interacts with Zn(2+). The 'HIGH' region signature appears at 29–39; it reads ITAYDLCHIGH. Residues cysteine 208, histidine 233, and glutamate 237 each contribute to the Zn(2+) site. The 'KMSKS' region signature appears at 265–269; sequence KMSKS. Lysine 268 provides a ligand contact to ATP.

Belongs to the class-I aminoacyl-tRNA synthetase family. Monomer. Zn(2+) serves as cofactor.

It is found in the cytoplasm. The enzyme catalyses tRNA(Cys) + L-cysteine + ATP = L-cysteinyl-tRNA(Cys) + AMP + diphosphate. The polypeptide is Cysteine--tRNA ligase (Nitratidesulfovibrio vulgaris (strain ATCC 29579 / DSM 644 / CCUG 34227 / NCIMB 8303 / VKM B-1760 / Hildenborough) (Desulfovibrio vulgaris)).